Reading from the N-terminus, the 106-residue chain is ATP-dependent Clp protease adapter protein ClpS (106 aa).

Belongs to the ClpS family. In terms of assembly, binds to the N-terminal domain of the chaperone ClpA.

Functionally, involved in the modulation of the specificity of the ClpAP-mediated ATP-dependent protein degradation. The chain is ATP-dependent Clp protease adapter protein ClpS from Yersinia pestis bv. Antiqua (strain Antiqua).